Consider the following 861-residue polypeptide: ToMV resistant protein Tm-2 netted virescent (861 aa).

A coiled-coil region spans residues 63–83 (VKNLLKDIQELAGDVEDLLDD). In terms of domain architecture, NB-ARC spans 162–388 (DDFNMLQAKL…LESMGHKVQD (227 aa)). 185–192 (GMPGLGKT) serves as a coordination point for ATP. 13 LRR repeats span residues 225–248 (LDIA…NLRS), 305–327 (LHAL…IFNF), 388–411 (DGCA…CFLY), 449–472 (LAED…TYNG), 510–536 (VARL…KLEK), 585–608 (MTCL…IVKL), 609–631 (TRLE…VWES), 652–680 (ISSF…FFEP), 689–710 (LRKL…IFSP), 712–735 (LKAL…LSSY), 736–758 (PHIA…SFPP), 784–807 (LRKL…EANG), and 810–835 (FPQL…DVSM).

This sequence belongs to the disease resistance NB-LRR family. (Microbial infection) Interacts with tobamoviruses mouvement protein at the plasma membrane; this interaction triggers defense responses leading to programmed cell death. As to quaternary structure, binds to HSP90 proteins; this interaction seems required for defense responses toward tobamoviruses.

It is found in the cell membrane. Its function is as follows. Inhibitor of viral mouvements which confers resistance to some tobamoviruses including tomato mosaic virus (ToMV) (e.g. isolate L and W3) and tobacco mosaic virus (TMV), but not to resistance-breaking isolates (e.g. Ltbl) ToMV and tomato brown rugose fruit virus (ToBRFV). Elicits a hypersensitive reaction in response to avirulent (Avr) movement proteins from resistance inducing tobamoviruses (e.g. ToMV and TMV) strains, thus leading to programmed cell death. In Solanum lycopersicum (Tomato), this protein is ToMV resistant protein Tm-2 netted virescent.